The primary structure comprises 161 residues: Large ribosomal subunit protein uL15 (161 aa).

Positions Met-1 to Pro-10 are enriched in basic and acidic residues. A disordered region spans residues Met-1–Glu-42. Residues Arg-21–Val-35 are compositionally biased toward gly residues.

Belongs to the universal ribosomal protein uL15 family. In terms of assembly, part of the 50S ribosomal subunit.

Its function is as follows. Binds to the 23S rRNA. The protein is Large ribosomal subunit protein uL15 of Acidiphilium cryptum (strain JF-5).